We begin with the raw amino-acid sequence, 164 residues long: Nucleotide-binding protein EF_1165 (164 aa).

This sequence belongs to the YajQ family.

Functionally, nucleotide-binding protein. The protein is Nucleotide-binding protein EF_1165 of Enterococcus faecalis (strain ATCC 700802 / V583).